A 1794-amino-acid polypeptide reads, in one-letter code: Non-reducing polyketide synthase nscA (1794 aa).

The N-terminal acylcarrier protein transacylase domain (SAT) stretch occupies residues 19–256 (DLKDLFRRLH…PLPVYDGLCH (238 aa)). In terms of domain architecture, Ketosynthase family 3 (KS3) spans 389–822 (ASKLAIVGMA…GGNTTVLLED (434 aa)). A compositionally biased stretch (basic and acidic residues) spans 428–440 (DRFDLNTHYDPTG). Residues 428–448 (DRFDLNTHYDPTGKTENATQT) form a disordered region. Active-site for beta-ketoacyl synthase activity residues include C562, H697, and H740. The malonyl-CoA:ACP transacylase (MAT) domain stretch occupies residues 927–1230 (TFTGQGAYYS…SVISSCRRNE (304 aa)). A product template (PT) domain region spans residues 1314-1633 (TSLVHQITTE…RLLMDRFFSP (320 aa)). Residues 1318–1454 (HQITTETVEA…CVVRFEDPAA (137 aa)) are N-terminal hotdog fold. Residues 1318–1628 (HQITTETVEA…FRRVPRLLMD (311 aa)) form the PKS/mFAS DH domain. H1350 serves as the catalytic Proton acceptor; for dehydratase activity. Residues 1482 to 1628 (ASKLSKPLAY…FRRVPRLLMD (147 aa)) are C-terminal hotdog fold. The active-site Proton donor; for dehydratase activity is the D1539. The tract at residues 1637-1719 (SHTEKQLQET…ATSDRGDSTD (83 aa)) is disordered. The segment covering 1644–1655 (QETAPSATNVKK) has biased composition (polar residues). A Carrier domain is found at 1717 to 1794 (STDAGVVGQC…EMTAWLEEYC (78 aa)). At S1754 the chain carries O-(pantetheine 4'-phosphoryl)serine.

Pantetheine 4'-phosphate is required as a cofactor.

It participates in secondary metabolite biosynthesis. Functionally, non-reducing polyketide synthase; part of the gene cluster that mediates the biosynthesis of neosartoricin, a prenylated anthracenone that exhibits T-cell antiproliferative activity, suggestive of a physiological role as an immunosuppressive agent. The non-reducing polyketide synthase nscA probably synthesizes and cyclizes the decaketide backbone. The hydrolase nscB then mediates the product release through hydrolysis followed by spontaneous decarboxylation. The prenyltransferase nscD catalyzes the addition of the dimethylallyl group to the aromatic C5. The FAD-dependent monooxygenase nscC is then responsible for the stereospecific hydroxylation at C2. There is no gene encoding O-acetyltransferase in the nsc gene cluster; thus, the last step of 2-O-acetylation leading to neosartoricin may be catalyzed by an unidentified O-acetyltransferase. The protein is Non-reducing polyketide synthase nscA of Aspergillus fumigatus (strain ATCC MYA-4609 / CBS 101355 / FGSC A1100 / Af293) (Neosartorya fumigata).